The chain runs to 323 residues: MIGTNVIRRNANFLQVIKSYYQLTKPRIIPLLLITTAAAMWIASNGQVDPVLLLVTLLGGTLAAASAQTLNCIYDQDIDYAMLRTRARPIPSGRVRPLHALIFAIILAVLSFTLFVVFVNMASALLAMSGIAFYMLIYTHMLKRHSPQNIVIGGAAGSIPPLVGWAAVTGDLSWAAWALFAIIFLWTPPHFWALALMIKDDYAQVNVPMMPVVEGEESTVEQIWIYTLIVVPFTFILVYPLAASGIVYTLVALVLGGMFIYKTWQLKQNPLDKDLARSLFKYSILYMMLLCTGMVVDSLPMTHEMIAAVGDNLNTLVSLIPLH.

A run of 9 helical transmembrane segments spans residues 28-48 (IIPL…NGQV), 50-70 (PVLL…AQTL), 99-119 (HALI…VVFV), 122-142 (ASAL…THML), 150-170 (IVIG…AVTG), 178-198 (ALFA…ALMI), 223-243 (IWIY…PLAA), 244-264 (SGIV…YKTW), and 279-299 (LFKY…VDSL).

This sequence belongs to the UbiA prenyltransferase family. Protoheme IX farnesyltransferase subfamily.

It localises to the cell inner membrane. The enzyme catalyses heme b + (2E,6E)-farnesyl diphosphate + H2O = Fe(II)-heme o + diphosphate. It participates in porphyrin-containing compound metabolism; heme O biosynthesis; heme O from protoheme: step 1/1. In terms of biological role, converts heme B (protoheme IX) to heme O by substitution of the vinyl group on carbon 2 of heme B porphyrin ring with a hydroxyethyl farnesyl side group. The protein is Protoheme IX farnesyltransferase of Gloeothece citriformis (strain PCC 7424) (Cyanothece sp. (strain PCC 7424)).